The sequence spans 352 residues: DNA polymerase IV (352 aa).

Residues isoleucine 4–glycine 185 enclose the UmuC domain. Positions 8 and 103 each coordinate Mg(2+). Residue glutamate 104 is part of the active site.

It belongs to the DNA polymerase type-Y family. Monomer. The cofactor is Mg(2+).

The protein localises to the cytoplasm. It catalyses the reaction DNA(n) + a 2'-deoxyribonucleoside 5'-triphosphate = DNA(n+1) + diphosphate. Its function is as follows. Poorly processive, error-prone DNA polymerase involved in untargeted mutagenesis. Copies undamaged DNA at stalled replication forks, which arise in vivo from mismatched or misaligned primer ends. These misaligned primers can be extended by PolIV. Exhibits no 3'-5' exonuclease (proofreading) activity. May be involved in translesional synthesis, in conjunction with the beta clamp from PolIII. The sequence is that of DNA polymerase IV from Yersinia pseudotuberculosis serotype O:1b (strain IP 31758).